The chain runs to 30 residues: Acyl-CoA-binding protein 1 (30 aa).

Positions 1–15 are enriched in basic and acidic residues; that stretch reads ALKDEFEEHAEKAKT. Positions 1–30 are disordered; it reads ALKDEFEEHAEKAKTLPENTSNENKLILYG. Positions 2–30 constitute an ACB domain; sequence LKDEFEEHAEKAKTLPENTSNENKLILYG.

Belongs to the ACBP family.

It is found in the cytoplasm. In terms of biological role, binds medium- and long-chain acyl-CoA esters with very high affinity and may function as an intracellular carrier of acyl-CoA esters. In Digitalis lanata (Grecian foxglove), this protein is Acyl-CoA-binding protein 1.